The sequence spans 107 residues: Large ribosomal subunit protein eL33A (107 aa).

At Ala2 the chain carries N-acetylalanine; partial. Residue Lys47 forms a Glycyl lysine isopeptide (Lys-Gly) (interchain with G-Cter in ubiquitin) linkage.

The protein belongs to the eukaryotic ribosomal protein eL33 family. Component of the large ribosomal subunit (LSU). Mature yeast ribosomes consist of a small (40S) and a large (60S) subunit. The 40S small subunit contains 1 molecule of ribosomal RNA (18S rRNA) and 33 different proteins (encoded by 57 genes). The large 60S subunit contains 3 rRNA molecules (25S, 5.8S and 5S rRNA) and 46 different proteins (encoded by 81 genes). In terms of processing, N-terminally acetylated by acetyltransferase NatA.

The protein localises to the cytoplasm. Functionally, component of the ribosome, a large ribonucleoprotein complex responsible for the synthesis of proteins in the cell. The small ribosomal subunit (SSU) binds messenger RNAs (mRNAs) and translates the encoded message by selecting cognate aminoacyl-transfer RNA (tRNA) molecules. The large subunit (LSU) contains the ribosomal catalytic site termed the peptidyl transferase center (PTC), which catalyzes the formation of peptide bonds, thereby polymerizing the amino acids delivered by tRNAs into a polypeptide chain. The nascent polypeptides leave the ribosome through a tunnel in the LSU and interact with protein factors that function in enzymatic processing, targeting, and the membrane insertion of nascent chains at the exit of the ribosomal tunnel. This is Large ribosomal subunit protein eL33A from Saccharomyces cerevisiae (strain ATCC 204508 / S288c) (Baker's yeast).